We begin with the raw amino-acid sequence, 205 residues long: Outer-membrane lipoprotein carrier protein (205 aa).

The N-terminal stretch at Met-1–Ala-22 is a signal peptide.

Belongs to the LolA family. As to quaternary structure, monomer.

It is found in the periplasm. Functionally, participates in the translocation of lipoproteins from the inner membrane to the outer membrane. Only forms a complex with a lipoprotein if the residue after the N-terminal Cys is not an aspartate (The Asp acts as a targeting signal to indicate that the lipoprotein should stay in the inner membrane). The chain is Outer-membrane lipoprotein carrier protein from Haemophilus influenzae (strain PittEE).